Here is a 751-residue protein sequence, read N- to C-terminus: Diamine oxidase [copper-containing] (751 aa).

Positions 1-19 (MPALGWAVAAILMLQTAMA) are cleaved as a signal peptide. N-linked (GlcNAc...) asparagine glycosylation is found at N110 and N168. A disulfide bridge connects residues C177 and C181. The Proton acceptor role is filled by D373. The cysteines at positions 391 and 417 are disulfide-linked. The active-site Schiff-base intermediate with substrate; via topaquinone is the Y461. Y461 carries the 2',4',5'-topaquinone modification. The Cu(2+) site is built by H510 and H512. Positions 519, 520, and 521 each coordinate Ca(2+). Residue N538 is glycosylated (N-linked (GlcNAc...) asparagine). Residues E562, F653, N656, E658, D664, and L665 each coordinate Ca(2+). A Cu(2+)-binding site is contributed by H675. N745 carries an N-linked (GlcNAc...) asparagine glycan.

Belongs to the copper/topaquinone oxidase family. Homodimer; disulfide-linked. Cu(2+) serves as cofactor. Requires Ca(2+) as cofactor. The cofactor is L-topaquinone. N-glycosylated. Post-translationally, topaquinone (TPQ) is generated by copper-dependent autoxidation of a specific tyrosyl residue. In terms of tissue distribution, widely expressed with higher expression in placenta and kidney.

It is found in the secreted. It localises to the extracellular space. Its subcellular location is the cell membrane. It carries out the reaction histamine + O2 + H2O = imidazole-4-acetaldehyde + H2O2 + NH4(+). It catalyses the reaction N(tau)-methylhistamine + O2 + H2O = 1-methylimidazole-4-acetaldehyde + H2O2 + NH4(+). The catalysed reaction is putrescine + O2 + H2O = 4-aminobutanal + H2O2 + NH4(+). The enzyme catalyses cadaverine + O2 + H2O = 5-aminopentanal + H2O2 + NH4(+). Inhibited by amiloride and amiloride analogs. Inhibited by isoniazid, cimetidine, clonidine, berenil and pentamidine. Catalyzes the oxidative deamination of primary amines to the corresponding aldehydes with the concomitant production of hydrogen peroxide and ammonia. Its preferred substrates are the diamines histamine and 1-methylhistamine and it could therefore play a role in allergic and immune responses. Has a broad specificity for diamines and can also act on cadaverine and putrescine, two products of amino acid catabolism. It could also act on polyamines, like spermidine and spermine though less efficiently, and regulate various biological processes. This Homo sapiens (Human) protein is Diamine oxidase [copper-containing].